We begin with the raw amino-acid sequence, 276 residues long: 2-dehydro-3-deoxyphosphooctonate aldolase (276 aa).

It belongs to the KdsA family.

The protein localises to the cytoplasm. It catalyses the reaction D-arabinose 5-phosphate + phosphoenolpyruvate + H2O = 3-deoxy-alpha-D-manno-2-octulosonate-8-phosphate + phosphate. It functions in the pathway carbohydrate biosynthesis; 3-deoxy-D-manno-octulosonate biosynthesis; 3-deoxy-D-manno-octulosonate from D-ribulose 5-phosphate: step 2/3. It participates in bacterial outer membrane biogenesis; lipopolysaccharide biosynthesis. This chain is 2-dehydro-3-deoxyphosphooctonate aldolase, found in Xylella fastidiosa (strain M23).